A 264-amino-acid chain; its full sequence is Ribonuclease HII (264 aa).

Residues 33–224 (GPVAGVDEVG…VRRVASGSNT (192 aa)) form the RNase H type-2 domain. Residues Asp-39, Glu-40, and Asp-133 each contribute to the a divalent metal cation site. The tract at residues 222–264 (SNTAEVADGQPDPRDGTAQTGEGRWSKSSHPATMRATGRAQGT) is disordered.

Belongs to the RNase HII family. Mn(2+) serves as cofactor. Requires Mg(2+) as cofactor.

It is found in the cytoplasm. It carries out the reaction Endonucleolytic cleavage to 5'-phosphomonoester.. Endonuclease that specifically degrades the RNA of RNA-DNA hybrids. In Mycobacterium bovis (strain ATCC BAA-935 / AF2122/97), this protein is Ribonuclease HII.